The primary structure comprises 278 residues: HTH-type transcriptional activator RhaS (278 aa).

In terms of domain architecture, HTH araC/xylS-type spans 174-272 (NLLLAWLEDH…NWSPRDIRQG (99 aa)). DNA-binding regions (H-T-H motif) lie at residues 191–212 (DAVADQFSLSLRTLHRQLKQQT) and 239–262 (VTDIAYRCGFSDSNHFSTLFRREF).

As to quaternary structure, binds DNA as a dimer.

Its subcellular location is the cytoplasm. In terms of biological role, activates expression of the rhaBAD and rhaT operons. This is HTH-type transcriptional activator RhaS from Shigella sonnei (strain Ss046).